Here is a 198-residue protein sequence, read N- to C-terminus: Small ribosomal subunit protein uS4 (198 aa).

Residues 91–154 (SRLDNVVYRL…KNLNIVQEAL (64 aa)) form the S4 RNA-binding domain.

It belongs to the universal ribosomal protein uS4 family. In terms of assembly, part of the 30S ribosomal subunit. Contacts protein S5. The interaction surface between S4 and S5 is involved in control of translational fidelity.

Functionally, one of the primary rRNA binding proteins, it binds directly to 16S rRNA where it nucleates assembly of the body of the 30S subunit. With S5 and S12 plays an important role in translational accuracy. The chain is Small ribosomal subunit protein uS4 from Aster yellows witches'-broom phytoplasma (strain AYWB).